The primary structure comprises 184 residues: uncharacterized protein (184 aa).

The segment at 1-24 is disordered; sequence MGISDQINSNLSSQSPFTVSTNPS.

This is an uncharacterized protein from Dictyostelium discoideum (Social amoeba).